The following is a 394-amino-acid chain: 1-deoxy-D-xylulose 5-phosphate reductoisomerase (394 aa).

NADPH contacts are provided by T10, G11, S12, I13, G38, R39, N40, and N123. 1-deoxy-D-xylulose 5-phosphate is bound at residue K124. E125 lines the NADPH pocket. D149 is a Mn(2+) binding site. 1-deoxy-D-xylulose 5-phosphate is bound by residues S150, E151, S175, and H198. Residue E151 participates in Mn(2+) binding. An NADPH-binding site is contributed by G204. 1-deoxy-D-xylulose 5-phosphate contacts are provided by S211, N216, K217, and E220. E220 is a Mn(2+) binding site.

The protein belongs to the DXR family. Mg(2+) is required as a cofactor. The cofactor is Mn(2+).

It catalyses the reaction 2-C-methyl-D-erythritol 4-phosphate + NADP(+) = 1-deoxy-D-xylulose 5-phosphate + NADPH + H(+). It functions in the pathway isoprenoid biosynthesis; isopentenyl diphosphate biosynthesis via DXP pathway; isopentenyl diphosphate from 1-deoxy-D-xylulose 5-phosphate: step 1/6. Its function is as follows. Catalyzes the NADPH-dependent rearrangement and reduction of 1-deoxy-D-xylulose-5-phosphate (DXP) to 2-C-methyl-D-erythritol 4-phosphate (MEP). This is 1-deoxy-D-xylulose 5-phosphate reductoisomerase from Cereibacter sphaeroides (strain ATCC 17023 / DSM 158 / JCM 6121 / CCUG 31486 / LMG 2827 / NBRC 12203 / NCIMB 8253 / ATH 2.4.1.) (Rhodobacter sphaeroides).